Consider the following 707-residue polypeptide: E3 ubiquitin-protein ligase Praja-2 (707 aa).

The segment covering 1-10 (MSQYTEKEPS) has biased composition (basic and acidic residues). 3 disordered regions span residues 1–23 (MSQYTEKEPSVMDQDSSKAAWPR), 75–120 (NTAG…PSVA), and 242–290 (AGDA…CVPG). Serine 2 carries the N-acetylserine modification. Residues 109–119 (LNQSTESNPSV) are compositionally biased toward polar residues. Residues 246-276 (EAVHQDGQEFQRSSEDGIVRKRRQDDTDQGR) show a composition bias toward basic and acidic residues. Residues serine 306 and serine 320 each carry the phosphoserine modification. Phosphoserine; by PKA is present on serine 339. Disordered stretches follow at residues 380–403 (VTPREAERHRATAENGATASGRQE) and 424–493 (EDSS…QTSL). Residues 381 to 391 (TPREAERHRAT) show a composition bias toward basic and acidic residues. Phosphoserine is present on serine 430. Residues 465 to 481 (NEPELQSDSSGPEEENQ) are compositionally biased toward acidic residues. Residues 482–491 (ELSLQEGEQT) show a composition bias toward polar residues. The interval 530-707 (DGNNNLEDDS…PANDNAEEAP (178 aa)) is interaction with PRKAR1A, PRKAR2A and PRKAR2B. Residues 549-569 (WSLFDGFADGLGVAEAISYVD) form a mediates interaction with TBC1D31 region. An RING-type; atypical zinc finger spans residues 633–674 (CPICCSEYIKDDIATELPCHHFFHKPCVSIWLQKSGTCPVCR). Residues 686–707 (AAASSEPDLDASPANDNAEEAP) form a disordered region.

As to quaternary structure, binds ubiquitin-conjugating enzymes (E2s). In vitro, interacts with the ubiquitin-conjugating enzyme, UBE2D2. The phosphorylated form interacts with PRKAR1A, PRKAR2A and PRKAR2B. Binds the catalytic subunits of cAMP-dependent protein kinase. Interacts with MFHAS1. Interacts with TBC1D31; the interaction is direct and recruits PJA2 to centrosomes. Highly expressed in the brain, in nerve cells but not in glial cells. Abundantly expressed in pyramidal neurons and in the CA3 region of apical dendrites. Colocalizes with PRKAR2B in dentate granule cells and at postsynaptic sites of primary hippocampal neurons.

The protein resides in the cytoplasm. The protein localises to the cell membrane. It localises to the endoplasmic reticulum membrane. It is found in the golgi apparatus membrane. Its subcellular location is the synapse. The protein resides in the postsynaptic density. The protein localises to the cytoskeleton. It localises to the microtubule organizing center. It is found in the centrosome. It catalyses the reaction S-ubiquitinyl-[E2 ubiquitin-conjugating enzyme]-L-cysteine + [acceptor protein]-L-lysine = [E2 ubiquitin-conjugating enzyme]-L-cysteine + N(6)-ubiquitinyl-[acceptor protein]-L-lysine.. The protein operates within protein modification; protein ubiquitination. Its function is as follows. Has E2-dependent E3 ubiquitin-protein ligase activity. Responsible for ubiquitination of cAMP-dependent protein kinase type I and type II-alpha/beta regulatory subunits and for targeting them for proteasomal degradation. Essential for PKA-mediated long-term memory processes. Through the ubiquitination of MFHAS1, positively regulates the TLR2 signaling pathway that leads to the activation of the downstream p38 and JNK MAP kinases and promotes the polarization of macrophages toward the pro-inflammatory M1 phenotype. Plays a role in ciliogenesis by ubiquitinating OFD1. In Rattus norvegicus (Rat), this protein is E3 ubiquitin-protein ligase Praja-2 (Pja2).